A 327-amino-acid chain; its full sequence is Cytochrome f (327 aa).

Positions 1–24 (MKRIYLALCALLLLLGTGSRPAAA) are cleaved as a signal peptide. 4 residues coordinate heme: Y25, C45, C48, and H49. Residues 293 to 313 (VKWLVAFLAAVAITQLLLVLK) form a helical membrane-spanning segment.

The protein belongs to the cytochrome f family. The 4 large subunits of the cytochrome b6-f complex are cytochrome b6, subunit IV (17 kDa polypeptide, PetD), cytochrome f and the Rieske protein, while the 4 small subunits are PetG, PetL, PetM and PetN. The complex functions as a dimer. It depends on heme as a cofactor.

It is found in the cellular thylakoid membrane. Functionally, component of the cytochrome b6-f complex, which mediates electron transfer between photosystem II (PSII) and photosystem I (PSI), cyclic electron flow around PSI, and state transitions. In Synechococcus sp. (strain JA-3-3Ab) (Cyanobacteria bacterium Yellowstone A-Prime), this protein is Cytochrome f.